A 242-amino-acid polypeptide reads, in one-letter code: Methylthioribulose-1-phosphate dehydratase (242 aa).

Residues 1–11 (MAQEIQKENND) are compositionally biased toward basic and acidic residues. Positions 1 to 20 (MAQEIQKENNDHLVQSSDPE) are disordered. Cys-100 lines the substrate pocket. Zn(2+) is bound by residues His-117 and His-119. Glu-146 acts as the Proton donor/acceptor in catalysis. Residue His-202 participates in Zn(2+) binding.

This sequence belongs to the aldolase class II family. MtnB subfamily. Requires Zn(2+) as cofactor.

The protein resides in the cytoplasm. The catalysed reaction is 5-(methylsulfanyl)-D-ribulose 1-phosphate = 5-methylsulfanyl-2,3-dioxopentyl phosphate + H2O. It functions in the pathway amino-acid biosynthesis; L-methionine biosynthesis via salvage pathway; L-methionine from S-methyl-5-thio-alpha-D-ribose 1-phosphate: step 2/6. In terms of biological role, catalyzes the dehydration of methylthioribulose-1-phosphate (MTRu-1-P) into 2,3-diketo-5-methylthiopentyl-1-phosphate (DK-MTP-1-P). The polypeptide is Methylthioribulose-1-phosphate dehydratase (Aspergillus niger (strain ATCC MYA-4892 / CBS 513.88 / FGSC A1513)).